Reading from the N-terminus, the 390-residue chain is 4-hydroxy-3-methylbut-2-en-1-yl diphosphate synthase (flavodoxin) (390 aa).

Residues C281, C284, C316, and E323 each contribute to the [4Fe-4S] cluster site.

This sequence belongs to the IspG family. [4Fe-4S] cluster serves as cofactor.

It carries out the reaction (2E)-4-hydroxy-3-methylbut-2-enyl diphosphate + oxidized [flavodoxin] + H2O + 2 H(+) = 2-C-methyl-D-erythritol 2,4-cyclic diphosphate + reduced [flavodoxin]. It participates in isoprenoid biosynthesis; isopentenyl diphosphate biosynthesis via DXP pathway; isopentenyl diphosphate from 1-deoxy-D-xylulose 5-phosphate: step 5/6. Its function is as follows. Converts 2C-methyl-D-erythritol 2,4-cyclodiphosphate (ME-2,4cPP) into 1-hydroxy-2-methyl-2-(E)-butenyl 4-diphosphate. The chain is 4-hydroxy-3-methylbut-2-en-1-yl diphosphate synthase (flavodoxin) from Salinispora arenicola (strain CNS-205).